The sequence spans 388 residues: Fructose-bisphosphate aldolase, chloroplastic (388 aa).

The N-terminal 38 residues, 1-38 (MASATLLKSSFLPKKSEWGATRQAAAPKPVTVSMVVRA), are a transit peptide targeting the chloroplast. Residue R72 coordinates substrate. The Proton acceptor role is filled by E215. Residue K257 is the Schiff-base intermediate with dihydroxyacetone-P of the active site. Substrate is bound by residues 299 to 301 (SGG) and R329.

The protein belongs to the class I fructose-bisphosphate aldolase family. Homotetramer. Expressed in leaf mesophyll cells.

Its subcellular location is the plastid. The protein resides in the chloroplast. The protein localises to the plastoglobule. The enzyme catalyses beta-D-fructose 1,6-bisphosphate = D-glyceraldehyde 3-phosphate + dihydroxyacetone phosphate. Its pathway is carbohydrate degradation; glycolysis; D-glyceraldehyde 3-phosphate and glycerone phosphate from D-glucose: step 4/4. Its function is as follows. Plays a key role in glycolysis and gluconeogenesis. The polypeptide is Fructose-bisphosphate aldolase, chloroplastic (Oryza sativa subsp. japonica (Rice)).